The sequence spans 365 residues: Sulfate/thiosulfate import ATP-binding protein CysA (365 aa).

One can recognise an ABC transporter domain in the interval 3–237 (IEIANIKKSF…PATRFVLEFM (235 aa)). 35–42 (GPSGSGKT) is an ATP binding site.

It belongs to the ABC transporter superfamily. Sulfate/tungstate importer (TC 3.A.1.6) family. In terms of assembly, the complex is composed of two ATP-binding proteins (CysA), two transmembrane proteins (CysT and CysW) and a solute-binding protein (CysP).

The protein resides in the cell inner membrane. It catalyses the reaction sulfate(out) + ATP + H2O = sulfate(in) + ADP + phosphate + H(+). It carries out the reaction thiosulfate(out) + ATP + H2O = thiosulfate(in) + ADP + phosphate + H(+). Functionally, part of the ABC transporter complex CysAWTP involved in sulfate/thiosulfate import. Responsible for energy coupling to the transport system. The polypeptide is Sulfate/thiosulfate import ATP-binding protein CysA (Escherichia coli O157:H7).